The primary structure comprises 592 residues: V-type ATP synthase alpha chain (592 aa).

Position 233–240 (233–240 (GPFGSGKT)) interacts with ATP.

The protein belongs to the ATPase alpha/beta chains family.

The enzyme catalyses ATP + H2O + 4 H(+)(in) = ADP + phosphate + 5 H(+)(out). Its function is as follows. Produces ATP from ADP in the presence of a proton gradient across the membrane. The V-type alpha chain is a catalytic subunit. This is V-type ATP synthase alpha chain from Clostridium botulinum (strain Okra / Type B1).